A 378-amino-acid polypeptide reads, in one-letter code: Ribosomal RNA large subunit methyltransferase G (378 aa).

The protein belongs to the methyltransferase superfamily. RlmG family.

It localises to the cytoplasm. It carries out the reaction guanosine(1835) in 23S rRNA + S-adenosyl-L-methionine = N(2)-methylguanosine(1835) in 23S rRNA + S-adenosyl-L-homocysteine + H(+). In terms of biological role, specifically methylates the guanine in position 1835 (m2G1835) of 23S rRNA. This chain is Ribosomal RNA large subunit methyltransferase G, found in Shigella flexneri.